Reading from the N-terminus, the 324-residue chain is Phospho-N-acetylmuramoyl-pentapeptide-transferase (324 aa).

10 helical membrane passes run 9–29, 53–73, 77–97, 117–137, 149–169, 176–196, 201–221, 227–247, 253–273, and 304–324; these read TFAVAFIITVIGVPLFIPFLV, TMGAVIFITAMLISFLIFSFI, VSAATWLLFITLALFGALGFL, FLGQVAISILFYLVYHFSDFA, IDLGWFFIIFILFWLVGFSNA, LDGLVSGLSVIAFSAFGVIAF, MDVAIFCFAIVGGMLGFLLFN, IFMGDTGSLALGGSIAAVSIL, LLLLIGIIFVIETASVILQVF, and VLTFWGIGLIGAIISVCVVIF.

Belongs to the glycosyltransferase 4 family. MraY subfamily. Mg(2+) serves as cofactor.

It localises to the cell membrane. It carries out the reaction UDP-N-acetyl-alpha-D-muramoyl-L-alanyl-gamma-D-glutamyl-meso-2,6-diaminopimeloyl-D-alanyl-D-alanine + di-trans,octa-cis-undecaprenyl phosphate = di-trans,octa-cis-undecaprenyl diphospho-N-acetyl-alpha-D-muramoyl-L-alanyl-D-glutamyl-meso-2,6-diaminopimeloyl-D-alanyl-D-alanine + UMP. It participates in cell wall biogenesis; peptidoglycan biosynthesis. In terms of biological role, catalyzes the initial step of the lipid cycle reactions in the biosynthesis of the cell wall peptidoglycan: transfers peptidoglycan precursor phospho-MurNAc-pentapeptide from UDP-MurNAc-pentapeptide onto the lipid carrier undecaprenyl phosphate, yielding undecaprenyl-pyrophosphoryl-MurNAc-pentapeptide, known as lipid I. The chain is Phospho-N-acetylmuramoyl-pentapeptide-transferase from Listeria innocua serovar 6a (strain ATCC BAA-680 / CLIP 11262).